The sequence spans 261 residues: Eukaryotic translation initiation factor 3 subunit G (261 aa).

The interval 156–180 (QDADSKNALGLRGDGRQMERNRSDE) is disordered. A compositionally biased stretch (basic and acidic residues) spans 168–180 (GDGRQMERNRSDE). One can recognise an RRM domain in the interval 181-259 (NTCRVTNLPQ…MVLKVEWTRP (79 aa)).

Belongs to the eIF-3 subunit G family. In terms of assembly, component of the eukaryotic translation initiation factor 3 (eIF-3) complex.

It localises to the cytoplasm. Its function is as follows. RNA-binding component of the eukaryotic translation initiation factor 3 (eIF-3) complex, which is involved in protein synthesis of a specialized repertoire of mRNAs and, together with other initiation factors, stimulates binding of mRNA and methionyl-tRNAi to the 40S ribosome. The eIF-3 complex specifically targets and initiates translation of a subset of mRNAs involved in cell proliferation. This subunit can bind 18S rRNA. In Caenorhabditis briggsae, this protein is Eukaryotic translation initiation factor 3 subunit G.